A 221-amino-acid chain; its full sequence is DNA replication complex GINS protein SLD5 (221 aa).

Belongs to the GINS4/SLD5 family. As to quaternary structure, component of the GINS complex which is a heterotetramer of gins1/psf1, gins2/psf2, gins3/psf3 and gins4/sld5. Component of the CMG helicase complex, composed of the mcm2-7 complex, the GINS complex and cdc45.

It localises to the nucleus. It is found in the chromosome. Its subcellular location is the cytoplasm. Required for initiation of chromosomal DNA replication. Core component of CDC45-MCM-GINS (CMG) helicase, the molecular machine that unwinds template DNA during replication, and around which the replisome is built. This Xenopus laevis (African clawed frog) protein is DNA replication complex GINS protein SLD5.